The chain runs to 319 residues: Quinolinate synthase (319 aa).

2 residues coordinate iminosuccinate: histidine 35 and serine 52. Residue cysteine 97 participates in [4Fe-4S] cluster binding. Iminosuccinate contacts are provided by residues 123-125 (YIN) and serine 140. [4Fe-4S] cluster is bound at residue cysteine 183. Iminosuccinate-binding positions include 209–211 (HPE) and threonine 226. Cysteine 276 contacts [4Fe-4S] cluster.

This sequence belongs to the quinolinate synthase family. Type 2 subfamily. [4Fe-4S] cluster serves as cofactor.

The protein resides in the cytoplasm. The enzyme catalyses iminosuccinate + dihydroxyacetone phosphate = quinolinate + phosphate + 2 H2O + H(+). The protein operates within cofactor biosynthesis; NAD(+) biosynthesis; quinolinate from iminoaspartate: step 1/1. Functionally, catalyzes the condensation of iminoaspartate with dihydroxyacetone phosphate to form quinolinate. The chain is Quinolinate synthase from Microcystis aeruginosa (strain NIES-843 / IAM M-2473).